The primary structure comprises 154 residues: Xanthine-guanine phosphoribosyltransferase (154 aa).

5-phospho-alpha-D-ribose 1-diphosphate contacts are provided by residues Arg37 to Gly38, Arg69, and Glu88 to Thr96. Residue Arg69 participates in GMP binding. Asp89 is a Mg(2+) binding site. Positions 92 and 135 each coordinate guanine. Asp92 and Ile135 together coordinate xanthine. GMP is bound by residues Asp92 to Thr96 and Trp134 to Ile135.

Belongs to the purine/pyrimidine phosphoribosyltransferase family. XGPT subfamily. As to quaternary structure, homotetramer. Mg(2+) is required as a cofactor.

It localises to the cell inner membrane. It carries out the reaction GMP + diphosphate = guanine + 5-phospho-alpha-D-ribose 1-diphosphate. The enzyme catalyses XMP + diphosphate = xanthine + 5-phospho-alpha-D-ribose 1-diphosphate. The catalysed reaction is IMP + diphosphate = hypoxanthine + 5-phospho-alpha-D-ribose 1-diphosphate. The protein operates within purine metabolism; GMP biosynthesis via salvage pathway; GMP from guanine: step 1/1. Its pathway is purine metabolism; XMP biosynthesis via salvage pathway; XMP from xanthine: step 1/1. Its function is as follows. Purine salvage pathway enzyme that catalyzes the transfer of the ribosyl-5-phosphate group from 5-phospho-alpha-D-ribose 1-diphosphate (PRPP) to the N9 position of the 6-oxopurines guanine and xanthine to form the corresponding ribonucleotides GMP (guanosine 5'-monophosphate) and XMP (xanthosine 5'-monophosphate), with the release of PPi. To a lesser extent, also acts on hypoxanthine. The protein is Xanthine-guanine phosphoribosyltransferase of Vibrio atlanticus (strain LGP32) (Vibrio splendidus (strain Mel32)).